The primary structure comprises 316 residues: ATP synthase gamma chain (316 aa).

This sequence belongs to the ATPase gamma chain family. As to quaternary structure, F-type ATPases have 2 components, CF(1) - the catalytic core - and CF(0) - the membrane proton channel. CF(1) has five subunits: alpha(3), beta(3), gamma(1), delta(1), epsilon(1). CF(0) has three main subunits: a, b and c.

The protein localises to the cellular thylakoid membrane. In terms of biological role, produces ATP from ADP in the presence of a proton gradient across the membrane. The gamma chain is believed to be important in regulating ATPase activity and the flow of protons through the CF(0) complex. The sequence is that of ATP synthase gamma chain from Prochlorococcus marinus subsp. pastoris (strain CCMP1986 / NIES-2087 / MED4).